The sequence spans 377 residues: Flagellin D (377 aa).

Coiled coils occupy residues 103–129 (SNSKSERVAIQEEITALNDELNRIAET) and 310–339 (AFQNRFNHAISNLDNINENVNASKSRIKDT).

It belongs to the bacterial flagellin family. As to quaternary structure, heteromer of multiple flagellin subunits including FlaA, FlaB, FlaC, FlaD and FlaE.

The protein resides in the secreted. Its subcellular location is the bacterial flagellum. Flagellin is the subunit protein which polymerizes to form the filaments of bacterial flagella. FlaD is not essential for flagellar synthesis and motility. In Vibrio cholerae serotype O1 (strain ATCC 39315 / El Tor Inaba N16961), this protein is Flagellin D (flaD).